The primary structure comprises 218 residues: Thiamine-phosphate synthase (218 aa).

4-amino-2-methyl-5-(diphosphooxymethyl)pyrimidine-binding positions include 46–50 (QFRDK) and aspartate 83. Positions 84 and 103 each coordinate Mg(2+). Residue serine 122 coordinates 4-amino-2-methyl-5-(diphosphooxymethyl)pyrimidine. 149-151 (TNS) lines the 2-[(2R,5Z)-2-carboxy-4-methylthiazol-5(2H)-ylidene]ethyl phosphate pocket. Residue lysine 152 coordinates 4-amino-2-methyl-5-(diphosphooxymethyl)pyrimidine. 2-[(2R,5Z)-2-carboxy-4-methylthiazol-5(2H)-ylidene]ethyl phosphate contacts are provided by residues glycine 181 and 201-202 (IT).

Belongs to the thiamine-phosphate synthase family. Requires Mg(2+) as cofactor.

It catalyses the reaction 2-[(2R,5Z)-2-carboxy-4-methylthiazol-5(2H)-ylidene]ethyl phosphate + 4-amino-2-methyl-5-(diphosphooxymethyl)pyrimidine + 2 H(+) = thiamine phosphate + CO2 + diphosphate. It carries out the reaction 2-(2-carboxy-4-methylthiazol-5-yl)ethyl phosphate + 4-amino-2-methyl-5-(diphosphooxymethyl)pyrimidine + 2 H(+) = thiamine phosphate + CO2 + diphosphate. The catalysed reaction is 4-methyl-5-(2-phosphooxyethyl)-thiazole + 4-amino-2-methyl-5-(diphosphooxymethyl)pyrimidine + H(+) = thiamine phosphate + diphosphate. It functions in the pathway cofactor biosynthesis; thiamine diphosphate biosynthesis; thiamine phosphate from 4-amino-2-methyl-5-diphosphomethylpyrimidine and 4-methyl-5-(2-phosphoethyl)-thiazole: step 1/1. Condenses 4-methyl-5-(beta-hydroxyethyl)thiazole monophosphate (THZ-P) and 2-methyl-4-amino-5-hydroxymethyl pyrimidine pyrophosphate (HMP-PP) to form thiamine monophosphate (TMP). This chain is Thiamine-phosphate synthase, found in Actinobacillus pleuropneumoniae serotype 7 (strain AP76).